We begin with the raw amino-acid sequence, 614 residues long: ATP-dependent zinc metalloprotease FtsH (614 aa).

The Stromal segment spans residues 1–7 (MKKQWKK). Residues 8–28 (IVLFVLPVIITLITLSSFLFY) traverse the membrane as a helical segment. At 29-116 (NQDVVHNWSS…AHPSSSNVNL (88 aa)) the chain is on the lumenal side. A helical membrane pass occupies residues 117-137 (VSWLSNLLLPLILIITLFFFF). The Stromal portion of the chain corresponds to 138–614 (RRGNKSSSGP…EFMRIVEERV (477 aa)). Residue 211 to 218 (GPPGTGKT) coordinates ATP. Histidine 432 contributes to the Zn(2+) binding site. Residue glutamate 433 is part of the active site. 2 residues coordinate Zn(2+): histidine 436 and aspartate 510.

The protein in the central section; belongs to the AAA ATPase family. It in the C-terminal section; belongs to the peptidase M41 family. As to quaternary structure, homohexamer. The cofactor is Zn(2+).

Its subcellular location is the plastid. The protein localises to the chloroplast thylakoid membrane. Acts as a processive, ATP-dependent zinc metallopeptidase. The protein is ATP-dependent zinc metalloprotease FtsH of Cyanidium caldarium (Red alga).